Here is a 349-residue protein sequence, read N- to C-terminus: Phosphoribosylformylglycinamidine cyclo-ligase (349 aa).

Belongs to the AIR synthase family.

It localises to the cytoplasm. It catalyses the reaction 2-formamido-N(1)-(5-O-phospho-beta-D-ribosyl)acetamidine + ATP = 5-amino-1-(5-phospho-beta-D-ribosyl)imidazole + ADP + phosphate + H(+). Its pathway is purine metabolism; IMP biosynthesis via de novo pathway; 5-amino-1-(5-phospho-D-ribosyl)imidazole from N(2)-formyl-N(1)-(5-phospho-D-ribosyl)glycinamide: step 2/2. The protein is Phosphoribosylformylglycinamidine cyclo-ligase of Jannaschia sp. (strain CCS1).